Consider the following 322-residue polypeptide: Deoxyhypusine hydroxylase (322 aa).

Fe cation-binding residues include histidine 78, glutamate 79, histidine 111, and glutamate 112. 4 HEAT-like PBS-type repeats span residues 109 to 135 (VRHE…CLKN), 203 to 229 (LRYR…GFND), 234 to 260 (FKHE…VLGR), and 267 to 293 (VRHE…YLND). Residues histidine 236, glutamate 237, histidine 269, and glutamate 270 each contribute to the Fe cation site.

Belongs to the deoxyhypusine hydroxylase family. It depends on Fe(2+) as a cofactor.

It localises to the cytoplasm. The protein resides in the nucleus. The catalysed reaction is [eIF5A protein]-deoxyhypusine + AH2 + O2 = [eIF5A protein]-hypusine + A + H2O. Its pathway is protein modification; eIF5A hypusination. Its function is as follows. Catalyzes the hydroxylation of the N(6)-(4-aminobutyl)-L-lysine intermediate to form hypusine, an essential post-translational modification only found in mature eIF-5A factor. The polypeptide is Deoxyhypusine hydroxylase (Candida glabrata (strain ATCC 2001 / BCRC 20586 / JCM 3761 / NBRC 0622 / NRRL Y-65 / CBS 138) (Yeast)).